Here is a 435-residue protein sequence, read N- to C-terminus: NADH-quinone oxidoreductase subunit D (435 aa).

This sequence belongs to the complex I 49 kDa subunit family. As to quaternary structure, NDH-1 is composed of 14 different subunits. Subunits NuoB, C, D, E, F, and G constitute the peripheral sector of the complex.

It localises to the cell inner membrane. It carries out the reaction a quinone + NADH + 5 H(+)(in) = a quinol + NAD(+) + 4 H(+)(out). NDH-1 shuttles electrons from NADH, via FMN and iron-sulfur (Fe-S) centers, to quinones in the respiratory chain. The immediate electron acceptor for the enzyme in this species is believed to be ubiquinone. Couples the redox reaction to proton translocation (for every two electrons transferred, four hydrogen ions are translocated across the cytoplasmic membrane), and thus conserves the redox energy in a proton gradient. The sequence is that of NADH-quinone oxidoreductase subunit D from Xanthomonas campestris pv. campestris (strain 8004).